The chain runs to 549 residues: MTVKSIKRAYQVIRTTLHYGLDDLIPSKVTPWYFKLLRGSLFWLRNKHKDKVGGERLKLAMQELGPVYIKFGQMLSTRRDLLSDEWAEELAMLQDRVPPFDSAIARESIEQELNAPIETYFDDFEDTPLASASISQVHTATLKSNGAKVVLKVLRPDVEQKVHADIQLMSQAANFLESLLGANNRLRPAEVVEDYRTTIEGELNLKLEALNAIKLRNNFLDSNALYIPYMYEELCFTRLIVMERIDGVPVSDKAALEAQGTNLKLLAERGVELFFTQVFRDNFFHADMHPGNIFVSREHPNDPFYIGLDCGIMGTLTDEDKRYLAENFLAFFNRDYRRIAQLYIESGWVSADTDISAFEQAVKVVCEPMFNKPLDEISFGHVLLELFRTARRFDMVVQPQLVLLEKTLLYIEGLGRQLYPQLDLWQTAKPFLEDWMAEQVGPKAMAGKIKQQLPYWADQLPELPELIYDNLKMGRNLAKTHNKLLDRYLKHQQKAHKSNYLLITSAILVICGTILLNQDATLWASYGSIGTGLILWVLGWRSRPKNRKF.

The region spanning 123-501 (DFEDTPLASA…QQKAHKSNYL (379 aa)) is the Protein kinase domain. ATP-binding positions include 129-137 (LASASISQV) and K152. The Proton acceptor role is filled by D287. The next 2 membrane-spanning stretches (helical) occupy residues 498–518 (SNYLLITSAILVICGTILLNQ) and 520–540 (ATLWASYGSIGTGLILWVLGW).

The protein belongs to the ABC1 family. UbiB subfamily.

Its subcellular location is the cell inner membrane. Its pathway is cofactor biosynthesis; ubiquinone biosynthesis [regulation]. Its function is as follows. Is probably a protein kinase regulator of UbiI activity which is involved in aerobic coenzyme Q (ubiquinone) biosynthesis. The sequence is that of Probable protein kinase UbiB from Shewanella piezotolerans (strain WP3 / JCM 13877).